The primary structure comprises 121 residues: Large ribosomal subunit protein uL14c (121 aa).

This sequence belongs to the universal ribosomal protein uL14 family. Part of the 50S ribosomal subunit.

It localises to the plastid. It is found in the chloroplast. Functionally, binds to 23S rRNA. This Phaeodactylum tricornutum (strain CCAP 1055/1) protein is Large ribosomal subunit protein uL14c.